We begin with the raw amino-acid sequence, 256 residues long: 5-keto-4-deoxy-D-glucarate aldolase (256 aa).

Residue H50 is the Proton acceptor of the active site. Q151 provides a ligand contact to substrate. E153 is a Mg(2+) binding site. Positions 178 and 179 each coordinate substrate. D179 contributes to the Mg(2+) binding site.

Belongs to the HpcH/HpaI aldolase family. KDGluc aldolase subfamily. In terms of assembly, homohexamer; trimer of dimers. Mg(2+) serves as cofactor.

It catalyses the reaction 5-dehydro-4-deoxy-D-glucarate = 2-hydroxy-3-oxopropanoate + pyruvate. It carries out the reaction 2-dehydro-3-deoxy-D-glucarate = 2-hydroxy-3-oxopropanoate + pyruvate. The protein operates within carbohydrate acid metabolism; galactarate degradation; D-glycerate from galactarate: step 2/3. Catalyzes the reversible retro-aldol cleavage of both 5-keto-4-deoxy-D-glucarate and 2-keto-3-deoxy-D-glucarate to pyruvate and tartronic semialdehyde. The protein is 5-keto-4-deoxy-D-glucarate aldolase of Escherichia coli O6:H1 (strain CFT073 / ATCC 700928 / UPEC).